The primary structure comprises 776 residues: V-set and immunoglobulin domain-containing protein 10-like 2 (776 aa).

Residues 1–28 (MVGLSAHHRPLGCRLLILFCLLHPGASG) form the signal peptide. 5 Ig-like domains span residues 32-140 (PTSN…LYLM), 150-234 (PRVQ…AFLD), 242-324 (PVIT…TTVQ), 399-498 (PTLA…LRLE), and 500-592 (PQLT…VLLE). 5 cysteine pairs are disulfide-bonded: C56-C122, C169-C217, C268-C308, C435-C480, and C521-C576. Residues 608–708 (TPPNVTISRL…EVKTPVDPAF (101 aa)) enclose the Fibronectin type-III domain. 2 N-linked (GlcNAc...) asparagine glycosylation sites follow: N611 and N637. Residues 713–733 (AVLGAAGTGVVVALATSLLVF) form a helical membrane-spanning segment.

The protein localises to the membrane. This Mus musculus (Mouse) protein is V-set and immunoglobulin domain-containing protein 10-like 2.